The chain runs to 302 residues: Probable alpha-L-glutamate ligase (302 aa).

One can recognise an ATP-grasp domain in the interval 112–294 (LQLLLKAGIP…IAAEIIDYIE (183 aa)). ATP-binding positions include lysine 148, 185–186 (DF), aspartate 194, and 218–220 (RAN). Residues aspartate 255, glutamate 267, and asparagine 269 each contribute to the Mg(2+) site. Mn(2+) contacts are provided by aspartate 255, glutamate 267, and asparagine 269.

The protein belongs to the RimK family. Mg(2+) serves as cofactor. Requires Mn(2+) as cofactor.

This chain is Probable alpha-L-glutamate ligase, found in Haemophilus influenzae (strain ATCC 51907 / DSM 11121 / KW20 / Rd).